A 222-amino-acid polypeptide reads, in one-letter code: Triosephosphate isomerase (222 aa).

Substrate is bound at residue 9–11 (NLK). Catalysis depends on H93, which acts as the Electrophile. Catalysis depends on E141, which acts as the Proton acceptor. Substrate-binding positions include I146, G181, and 202 to 203 (AS).

Belongs to the triosephosphate isomerase family. In terms of assembly, homotetramer; dimer of dimers.

It localises to the cytoplasm. It catalyses the reaction D-glyceraldehyde 3-phosphate = dihydroxyacetone phosphate. It participates in carbohydrate biosynthesis; gluconeogenesis. The protein operates within carbohydrate degradation; glycolysis; D-glyceraldehyde 3-phosphate from glycerone phosphate: step 1/1. Functionally, involved in the gluconeogenesis. Catalyzes stereospecifically the conversion of dihydroxyacetone phosphate (DHAP) to D-glyceraldehyde-3-phosphate (G3P). The polypeptide is Triosephosphate isomerase (Methanoculleus marisnigri (strain ATCC 35101 / DSM 1498 / JR1)).